The following is a 211-amino-acid chain: Urease accessory protein UreG (211 aa).

Gly11–Thr18 provides a ligand contact to GTP.

This sequence belongs to the SIMIBI class G3E GTPase family. UreG subfamily. As to quaternary structure, homodimer. UreD, UreF and UreG form a complex that acts as a GTP-hydrolysis-dependent molecular chaperone, activating the urease apoprotein by helping to assemble the nickel containing metallocenter of UreC. The UreE protein probably delivers the nickel.

The protein localises to the cytoplasm. Functionally, facilitates the functional incorporation of the urease nickel metallocenter. This process requires GTP hydrolysis, probably effectuated by UreG. In Actinobacillus pleuropneumoniae serotype 7 (strain AP76), this protein is Urease accessory protein UreG.